We begin with the raw amino-acid sequence, 214 residues long: Adenylate kinase (214 aa).

Residue 10-15 coordinates ATP; sequence GAGKGT. Residues 30–59 are NMP; the sequence is STGDMLRAAIKAGTELGKQAKSVIDAGQLV. Residues T31, R36, 57–59, 85–88, and Q92 each bind AMP; these read QLV and GFPR. The segment at 122-159 is LID; it reads GRRAHLPSGRTYHVVYNPPKEEGKDDETGEPLVIREDD. ATP is bound by residues R123 and 132-133; that span reads TY. Residues R156 and R167 each contribute to the AMP site. K200 provides a ligand contact to ATP.

Belongs to the adenylate kinase family. As to quaternary structure, monomer.

Its subcellular location is the cytoplasm. The catalysed reaction is AMP + ATP = 2 ADP. It functions in the pathway purine metabolism; AMP biosynthesis via salvage pathway; AMP from ADP: step 1/1. Its function is as follows. Catalyzes the reversible transfer of the terminal phosphate group between ATP and AMP. Plays an important role in cellular energy homeostasis and in adenine nucleotide metabolism. This chain is Adenylate kinase, found in Aliivibrio fischeri (strain ATCC 700601 / ES114) (Vibrio fischeri).